The primary structure comprises 361 residues: MTDKIKVGLIFGGNSSEYEVSIMSAHNIYEEIDTNKFDVYPMWITNDGYLANDADSRKVLDNPKMEVANPHKVANISNIVELKDRPEIDVFFPIVHGNLGEDGCLQGLFRVLDKPFVGDDVLAAAVTMDKEMTKILAQRAGVPVAKWIAVKRFEYNDPDNNKLDYEYVASQLGSDLFVKPSNQGSSVGVSHVTNEKEYKVALAEAFKYDDKVLVEETVHGTEVETAVLGNDKPIVAGVGQIINAKDSFYTYENKYDDNSTSTLEIPAKLPEGIVEKVRKNALKVFQATECSGLARIDSMLRTEDKEVVLTEVNALPGFTNISMYPKLFEEVGIPYTDLITKLIDYAMERYDHKKTLLHKHD.

Residues 134–344 (KILAQRAGVP…YTDLITKLID (211 aa)) enclose the ATP-grasp domain. 169–224 (ASQLGSDLFVKPSNQGSSVGVSHVTNEKEYKVALAEAFKYDDKVLVEETVHGTEVE) serves as a coordination point for ATP. Aspartate 297, glutamate 311, and asparagine 313 together coordinate Mg(2+).

This sequence belongs to the D-alanine--D-alanine ligase family. Requires Mg(2+) as cofactor. The cofactor is Mn(2+).

It is found in the cytoplasm. The enzyme catalyses 2 D-alanine + ATP = D-alanyl-D-alanine + ADP + phosphate + H(+). The protein operates within cell wall biogenesis; peptidoglycan biosynthesis. In terms of biological role, cell wall formation. The polypeptide is D-alanine--D-alanine ligase (Lactobacillus gasseri (strain ATCC 33323 / DSM 20243 / BCRC 14619 / CIP 102991 / JCM 1131 / KCTC 3163 / NCIMB 11718 / NCTC 13722 / AM63)).